We begin with the raw amino-acid sequence, 385 residues long: T-box transcription factor TBX10 (385 aa).

Residues 69–252 (LEMKPLWEEF…SNPFAKGFRE (184 aa)) constitute a DNA-binding region (T-box). 2 disordered regions span residues 283-310 (GSAE…NQLL) and 328-359 (QNLY…AGDQ). The span at 293–307 (KASASSSRTPTQPHN) shows a compositional bias: polar residues. Residues 331–347 (YPGSPSRAGPPRARLAP) are compositionally biased toward low complexity.

It localises to the nucleus. Its function is as follows. Probable transcriptional regulator involved in developmental processes. This Mus musculus (Mouse) protein is T-box transcription factor TBX10 (Tbx10).